The chain runs to 164 residues: MDAPRRDMELLSNSLAAYAHIRANPESFGLYFVLGVCFGLLLTLCLLVISISCAPRSRPRTPAPRRDPRSSTLEPEDEDDEEDEDTMTRLGPDDTLQGQELSTEPDGPLSVNVFTSAEELERAQRLEERERILREIWRTGQPDLLGSGTLGPGATATLGRMHYY.

The helical transmembrane segment at 29-49 (GLYFVLGVCFGLLLTLCLLVI) threads the bilayer. Residues 56-110 (RSRPRTPAPRRDPRSSTLEPEDEDDEEDEDTMTRLGPDDTLQGQELSTEPDGPLS) are disordered. The span at 74-85 (EPEDEDDEEDED) shows a compositional bias: acidic residues. Thr86, Thr149, and Thr157 each carry phosphothreonine.

The protein belongs to the EVA1 family.

It localises to the membrane. The protein is Protein eva-1 homolog B (Eva1b) of Mus musculus (Mouse).